The sequence spans 513 residues: Chromosomal replication initiator protein DnaA (513 aa).

Residues 1 to 87 form a domain I, interacts with DnaA modulators region; that stretch reads MSVELWQQCV…IGSKRSSAPR (87 aa). The domain II stretch occupies residues 87 to 176; sequence RAAPNAPLAA…QVEGALKHTS (90 aa). The segment at 113-163 is disordered; the sequence is AAPAPAPAPTSAPAKKAAAQKAAEVSEEPSRDSFDPMAGASSQQAPVRAEQ. Low complexity predominate over residues 123–135; sequence SAPAKKAAAQKAA. The domain III, AAA+ region stretch occupies residues 177–393; it reads YLNRTFTFEN…GALKRVIAHS (217 aa). ATP-binding residues include glycine 221, glycine 223, lysine 224, and threonine 225. Residues 394 to 513 form a domain IV, binds dsDNA region; sequence HFMGRDITIE…YKNLLRTLTT (120 aa).

The protein belongs to the DnaA family. In terms of assembly, oligomerizes as a right-handed, spiral filament on DNA at oriC.

Its subcellular location is the cytoplasm. Functionally, plays an essential role in the initiation and regulation of chromosomal replication. ATP-DnaA binds to the origin of replication (oriC) to initiate formation of the DNA replication initiation complex once per cell cycle. Binds the DnaA box (a 9 base pair repeat at the origin) and separates the double-stranded (ds)DNA. Forms a right-handed helical filament on oriC DNA; dsDNA binds to the exterior of the filament while single-stranded (ss)DNA is stabiized in the filament's interior. The ATP-DnaA-oriC complex binds and stabilizes one strand of the AT-rich DNA unwinding element (DUE), permitting loading of DNA polymerase. After initiation quickly degrades to an ADP-DnaA complex that is not apt for DNA replication. Binds acidic phospholipids. This Pseudomonas fluorescens (strain ATCC BAA-477 / NRRL B-23932 / Pf-5) protein is Chromosomal replication initiator protein DnaA.